The sequence spans 103 residues: Small ribosomal subunit protein uS10 (103 aa).

It belongs to the universal ribosomal protein uS10 family. Part of the 30S ribosomal subunit.

Its function is as follows. Involved in the binding of tRNA to the ribosomes. This chain is Small ribosomal subunit protein uS10, found in Picrophilus torridus (strain ATCC 700027 / DSM 9790 / JCM 10055 / NBRC 100828 / KAW 2/3).